We begin with the raw amino-acid sequence, 530 residues long: Dual specificity calcium/calmodulin-dependent 3',5'-cyclic nucleotide phosphodiesterase 1A (530 aa).

Calmodulin-binding stretches follow at residues 24–44 (TEKMWQRLKGILRCLVKQLEK) and 114–137 (EKPRFRSIVHVVQAGIFVERMYRK). One can recognise a PDEase domain in the interval 142–508 (VGLAYPEAVI…ERWKELAAQG (367 aa)). Histidine 219 (proton donor) is an active-site residue. Zn(2+) is bound by residues histidine 223, histidine 259, aspartate 260, and aspartate 366. Aspartate 260 is a binding site for Mg(2+). Disordered regions lie at residues 450-471 (TKTPSYGASRRSNMKGTTNDGT) and 502-530 (KELAAQGEPDPHKNSDLVNAEEKHAETHS). Residues 451–471 (KTPSYGASRRSNMKGTTNDGT) show a composition bias toward polar residues. Basic and acidic residues predominate over residues 510-530 (PDPHKNSDLVNAEEKHAETHS).

This sequence belongs to the cyclic nucleotide phosphodiesterase family. PDE1 subfamily. As to quaternary structure, homodimer. Interacts with YWHAZ. Zn(2+) serves as cofactor. Mg(2+) is required as a cofactor.

It catalyses the reaction a nucleoside 3',5'-cyclic phosphate + H2O = a nucleoside 5'-phosphate + H(+). The catalysed reaction is 3',5'-cyclic GMP + H2O = GMP + H(+). The enzyme catalyses 3',5'-cyclic AMP + H2O = AMP + H(+). With respect to regulation, type I PDE are activated by the binding of calmodulin in the presence of Ca(2+). Functionally, calcium/calmodulin-dependent cyclic nucleotide phosphodiesterase with a dual specificity for the second messengers cGMP and cAMP, which are key regulators of many important physiological processes. Has a higher efficiency with cGMP compared to cAMP. The sequence is that of Dual specificity calcium/calmodulin-dependent 3',5'-cyclic nucleotide phosphodiesterase 1A from Bos taurus (Bovine).